An 883-amino-acid polypeptide reads, in one-letter code: Alanine--tRNA ligase (883 aa).

Residues histidine 560, histidine 564, cysteine 665, and histidine 669 each contribute to the Zn(2+) site.

Belongs to the class-II aminoacyl-tRNA synthetase family. It depends on Zn(2+) as a cofactor.

Its subcellular location is the cytoplasm. The enzyme catalyses tRNA(Ala) + L-alanine + ATP = L-alanyl-tRNA(Ala) + AMP + diphosphate. Functionally, catalyzes the attachment of alanine to tRNA(Ala) in a two-step reaction: alanine is first activated by ATP to form Ala-AMP and then transferred to the acceptor end of tRNA(Ala). Also edits incorrectly charged Ser-tRNA(Ala) and Gly-tRNA(Ala) via its editing domain. This Mesomycoplasma hyopneumoniae (strain 7448) (Mycoplasma hyopneumoniae) protein is Alanine--tRNA ligase.